A 249-amino-acid polypeptide reads, in one-letter code: tRNA (guanine-N(1)-)-methyltransferase (249 aa).

Residues glycine 121 and 141–146 (LGDFVL) contribute to the S-adenosyl-L-methionine site.

It belongs to the RNA methyltransferase TrmD family. In terms of assembly, homodimer.

It localises to the cytoplasm. The enzyme catalyses guanosine(37) in tRNA + S-adenosyl-L-methionine = N(1)-methylguanosine(37) in tRNA + S-adenosyl-L-homocysteine + H(+). Specifically methylates guanosine-37 in various tRNAs. The chain is tRNA (guanine-N(1)-)-methyltransferase from Cereibacter sphaeroides (strain ATCC 17023 / DSM 158 / JCM 6121 / CCUG 31486 / LMG 2827 / NBRC 12203 / NCIMB 8253 / ATH 2.4.1.) (Rhodobacter sphaeroides).